A 33-amino-acid chain; its full sequence is Kappa-sparatoxin-Hv1a (33 aa).

Intrachain disulfides connect Cys-2–Cys-17, Cys-9–Cys-22, and Cys-16–Cys-27. Residue Trp-33 is modified to Tryptophan amide.

Expressed by the venom gland.

Its subcellular location is the secreted. Blocks transient outward voltage-gated potassium channels in rat ventricular myocytes (thus prolonging action-potential duration) and rat Kv4.2/KCNA4 channels expressed in Xenopus oocytes. Is also a weak blocker of calcium channels in rat cerebellar granule cells. This is Kappa-sparatoxin-Hv1a from Heteropoda venatoria (Brown huntsman spider).